The following is a 622-amino-acid chain: Chaperone protein HscA homolog (622 aa).

The protein belongs to the heat shock protein 70 family.

Its function is as follows. Chaperone involved in the maturation of iron-sulfur cluster-containing proteins. Has a low intrinsic ATPase activity which is markedly stimulated by HscB. This is Chaperone protein HscA homolog from Burkholderia mallei (strain NCTC 10247).